The primary structure comprises 308 residues: Glycine--tRNA ligase alpha subunit (308 aa).

Belongs to the class-II aminoacyl-tRNA synthetase family. Tetramer of two alpha and two beta subunits.

The protein resides in the cytoplasm. The enzyme catalyses tRNA(Gly) + glycine + ATP = glycyl-tRNA(Gly) + AMP + diphosphate. The chain is Glycine--tRNA ligase alpha subunit from Brucella canis (strain ATCC 23365 / NCTC 10854 / RM-666).